Here is a 612-residue protein sequence, read N- to C-terminus: MQAHFASEFMLSLAHALESQLRAAIDRAFPEAAASARESGTGLDPQLAPASKPEFGDFQANAALPLAKPLKQPPRQIAAAIVDQLMVDTAFTAICLTPEIAGPGFINLTVRPECLAAEVQARLADARLGVPLVEGDNDGQQPTPVVVDFSSPNIAKEMHVGHLRSTIIGDSLARVLEFRGHPVLRLNHVGDWGTQFGMLITHLKQVAPEALETADAVDLGDLVVFYRQAKQRFDDDEAFQTTSREEVVKLQGGDPISLKAWSLLCDQSRREFQKIYDRLDVRLNERGESFYNAYLESVVEDLNVSGLLVSDDGAQCVFLEGVTGKDGKPLPVIVQKSDGGFNYATTDLAAMRYRFAAPPQGDGARRVIYVTDAGQANHFAGVFQVAQRAGWIPDAGRLQHVPFGLVQGEDGKKLKTRAGDTVRLRELLDEAVERAESDLRRRLQEEGRDEDESFIEQVATTVGLAAVKYADLSQNRITNYQFSFDRMLALQGNTAPYLLYAVVRIAGIARKGGDLDVTTAELQFSETQEWALVRELLKFDAVIAEVEEELLPNRLCTYLFELSQVFNRFYDQVPVLKAEQPSRSCRLALCRLTADTLKLGLSLLGIPTLERM.

The 'HIGH' region signature appears at 152 to 162 (PNIAKEMHVGH).

It belongs to the class-I aminoacyl-tRNA synthetase family. Monomer.

It localises to the cytoplasm. It carries out the reaction tRNA(Arg) + L-arginine + ATP = L-arginyl-tRNA(Arg) + AMP + diphosphate. This is Arginine--tRNA ligase from Prochlorococcus marinus (strain MIT 9313).